The primary structure comprises 717 residues: Ribosomal RNA large subunit methyltransferase K/L (717 aa).

The THUMP domain occupies 44–155 (DAYKVCIYSY…KQFVNVFLCL (112 aa)).

Belongs to the methyltransferase superfamily. RlmKL family.

The protein resides in the cytoplasm. The catalysed reaction is guanosine(2445) in 23S rRNA + S-adenosyl-L-methionine = N(2)-methylguanosine(2445) in 23S rRNA + S-adenosyl-L-homocysteine + H(+). It catalyses the reaction guanosine(2069) in 23S rRNA + S-adenosyl-L-methionine = N(2)-methylguanosine(2069) in 23S rRNA + S-adenosyl-L-homocysteine + H(+). Specifically methylates the guanine in position 2445 (m2G2445) and the guanine in position 2069 (m7G2069) of 23S rRNA. This is Ribosomal RNA large subunit methyltransferase K/L from Francisella tularensis subsp. holarctica (strain FTNF002-00 / FTA).